Consider the following 312-residue polypeptide: GTP cyclohydrolase MptA (312 aa).

This sequence belongs to the GTP cyclohydrolase IV family. As to quaternary structure, homodimer. Fe(2+) serves as cofactor.

It carries out the reaction GTP + H2O = 7,8-dihydroneopterin 2',3'-cyclic phosphate + formate + diphosphate + H(+). The protein operates within cofactor biosynthesis; 5,6,7,8-tetrahydromethanopterin biosynthesis. In terms of biological role, converts GTP to 7,8-dihydro-D-neopterin 2',3'-cyclic phosphate, the first intermediate in the biosynthesis of coenzyme methanopterin. The protein is GTP cyclohydrolase MptA of Methanococcus vannielii (strain ATCC 35089 / DSM 1224 / JCM 13029 / OCM 148 / SB).